The sequence spans 309 residues: Protein FdhE (309 aa).

Belongs to the FdhE family.

It is found in the cytoplasm. Necessary for formate dehydrogenase activity. In Salmonella arizonae (strain ATCC BAA-731 / CDC346-86 / RSK2980), this protein is Protein FdhE.